Reading from the N-terminus, the 607-residue chain is MIYNQALIEITKQGAVAVEEIKFSPPKLQTLISSIQNGGSPIINKNGSPAANALKNKQILQLQGQQQQQQQQQQNHSQQQHNNQSSVYSLNSLNPYYVQQVLCQLQKPHNFIKQVHVVVKNTPFGISMKSNDPQFNFHNYVIKATLLYDCDPPKMVDFIHNEPLQYVATVSEDGTEVVVDVKVGILSSQHQGSMFLAVLHISHTSVPSPSPNEPIMTILNNIGGNSIANLNSQLPNPIYNLCVVSHPIRIVSKVDHVKKEGIPILKKKTFHEILTDKLKKLQKFQDSQSKWIKNLYQQHLIEFDMEPYCSKKDQNNNNNNNNSNSNCQNGGGSICDDSSNSSTPSLSSYSNGNNKYNNNNNDSSESDESDDDDNNDDDDNDSIDFNISKQKNQQHLQQQLLNHQSKQQKVSSTNNNTTTTTSSSSASSIQQKQQPVQPQQQKQQNQSSNFQNSFNRVVEAFKYVPESERKDIITKMVEQLRSDDLEQLVATFMDELGVGDANSDVSSTKGGNNNNNNSIGCFCENCPSKKELERFQGLCMNFFVPQSTLNPMNNQQLLYSSLFSSSNDNNTQSQMNNSISVNNHHHHHHHQPNNSNLTNDLLQLPIV.

3 disordered regions span residues 62 to 84 (LQGQ…HNNQ), 334 to 451 (ICDD…SNFQ), and 568 to 602 (DNNT…NDLL). A compositionally biased stretch (low complexity) spans 334-363 (ICDDSSNSSTPSLSSYSNGNNKYNNNNNDS). Over residues 364–382 (SESDESDDDDNNDDDDNDS) the composition is skewed to acidic residues. Low complexity-rich tracts occupy residues 383–451 (IDFN…SNFQ) and 568–582 (DNNT…ISVN).

The sequence is that of Developmental gene 1062 protein (DG1062) from Dictyostelium discoideum (Social amoeba).